Consider the following 239-residue polypeptide: Phosphoribosylaminoimidazole-succinocarboxamide synthase (239 aa).

It belongs to the SAICAR synthetase family.

The enzyme catalyses 5-amino-1-(5-phospho-D-ribosyl)imidazole-4-carboxylate + L-aspartate + ATP = (2S)-2-[5-amino-1-(5-phospho-beta-D-ribosyl)imidazole-4-carboxamido]succinate + ADP + phosphate + 2 H(+). It participates in purine metabolism; IMP biosynthesis via de novo pathway; 5-amino-1-(5-phospho-D-ribosyl)imidazole-4-carboxamide from 5-amino-1-(5-phospho-D-ribosyl)imidazole-4-carboxylate: step 1/2. This chain is Phosphoribosylaminoimidazole-succinocarboxamide synthase, found in Acinetobacter baumannii (strain AB307-0294).